Reading from the N-terminus, the 130-residue chain is EG45-like domain containing protein 2 (130 aa).

The N-terminal stretch at M1–A25 is a signal peptide. The Expansin-like EG45 domain maps to G28–I130. N-linked (GlcNAc...) asparagine glycosylation is present at N106.

Expressed in unstressed leaves.

It is found in the secreted. In terms of biological role, plays a systemic role in water and solute homeostasis. The protein is EG45-like domain containing protein 2 (EGC2) of Arabidopsis thaliana (Mouse-ear cress).